The primary structure comprises 946 residues: Protocadherin alpha-10 (946 aa).

The N-terminal stretch at 1–30 (MSCVAMKYCHESWCLLLSLLLFAIWEPGSG) is a signal peptide. 6 consecutive Cadherin domains span residues 31-134 (QLRY…PPVF), 135-243 (PTTE…APAF), 244-351 (DRAI…APKI), 352-456 (IVTS…APAF), 457-566 (AQSE…APTL), and 582-679 (VPRS…APKA). Topologically, residues 31–697 (QLRYSVPEEA…ASESSVVDVN (667 aa)) are extracellular. Residue asparagine 258 is glycosylated (N-linked (GlcNAc...) asparagine). N-linked (GlcNAc...) asparagine glycosylation is present at asparagine 549. A helical transmembrane segment spans residues 698–718 (VYLIIAICAVSSLLVLTLVLY). The Cytoplasmic portion of the chain corresponds to 719-946 (TALRCSALPT…GNSTTDNSDQ (228 aa)). PXXP repeat units lie at residues 734 to 737 (PGKP), 774 to 777 (PSVP), 795 to 798 (PRQP), 828 to 831 (PGGP), 869 to 872 (PGNP), and 887 to 890 (PGSP). Positions 734–890 (PGKPMLVCSS…PDKFIIPGSP (157 aa)) are 6 X 4 AA repeats of P-X-X-P. 2 disordered regions span residues 826 to 852 (AGPG…EVSP) and 865 to 946 (FKYG…NSDQ). A compositionally biased stretch (basic and acidic residues) spans 905–919 (DKSDFITFGKKEETK).

It localises to the cell membrane. Its function is as follows. Potential calcium-dependent cell-adhesion protein. May be involved in the establishment and maintenance of specific neuronal connections in the brain. The polypeptide is Protocadherin alpha-10 (Mus musculus (Mouse)).